The primary structure comprises 1023 residues: Sodium/potassium-transporting ATPase subunit alpha-1 (1023 aa).

A propeptide spanning residues 1 to 5 is cleaved from the precursor; it reads MGKGV. A compositionally biased stretch (basic and acidic residues) spans 1-11; it reads MGKGVGRDKYE. A disordered region spans residues 1-38; it reads MGKGVGRDKYEPAAVSEHGDKKGKKAKKERDMDELKKE. Over 6–87 the chain is Cytoplasmic; sequence GRDKYEPAAV…NALTPPPTTP (82 aa). At K9 the chain carries N6-acetyllysine. The residue at position 10 (Y10) is a Phosphotyrosine. S16 bears the Phosphoserine; by PKC mark. Residue K21 is modified to N6-acetyllysine. Residues 28-38 show a composition bias toward basic and acidic residues; that stretch reads KERDMDELKKE. A phosphoserine mark is found at S40 and S47. The phosphoinositide-3 kinase binding stretch occupies residues 82–84; it reads PPP. A helical transmembrane segment spans residues 88-108; that stretch reads EWVKFCRQLFGGFSMLLWIGA. At 109–131 the chain is on the extracellular side; that stretch reads ILCFLAYGILAATEEDFDNDNLY. The helical transmembrane segment at 132–152 threads the bilayer; the sequence is LGVVLAAVVIITGCFSYYQEA. Topologically, residues 153–288 are cytoplasmic; the sequence is KSSKIMESFK…GGQTPIAAEI (136 aa). The interval 216–235 is disordered; it reads SSLTGESEPQTRSPDFTNEN. Residue S228 is modified to Phosphoserine. Y260 carries the phosphotyrosine modification. The chain crosses the membrane as a helical span at residues 289 to 308; it reads EHFIHIITGVAVFLGVSFFI. Residues 309 to 320 are Extracellular-facing; sequence LSLILEYTWLEA. Residues 321–338 form a helical membrane-spanning segment; sequence VIFLIGIIVANVPEGLLA. At 339–772 the chain is on the cytoplasmic side; the sequence is TVTVCLTLTA…EEGRLIFDNL (434 aa). Catalysis depends on D376, which acts as the 4-aspartylphosphate intermediate. Residues S452 and S484 each carry the phosphoserine modification. Residue K487 participates in ATP binding. Y542 is modified (phosphotyrosine). The interval 596–717 is mediates interaction with SCN7A; that stretch reads RAAVPDAVGK…QGAIVAVTGD (122 aa). K661 bears the N6-succinyllysine mark. Phosphoserine occurs at positions 668 and 675. D717 and D721 together coordinate Mg(2+). A helical membrane pass occupies residues 773-792; that stretch reads KKSIAYTLTSNIPEITPFLI. At 793–802 the chain is on the extracellular side; the sequence is FIIANIPLPL. The chain crosses the membrane as a helical span at residues 803-823; it reads GTVTILCIDLGTDMVPAISLA. Over 824 to 843 the chain is Cytoplasmic; that stretch reads YEQAESDIMKRQPRNPKTDK. A helical transmembrane segment spans residues 844–866; that stretch reads LVNERLISMAYGQIGMIQALGGF. Residues 867-918 are Extracellular-facing; the sequence is FTYFVILAENGFLPFHLLGIRVDWDDRWINDVEDSYGQQWTYEQRKIVEFTC. A helical membrane pass occupies residues 919–938; sequence HTAFFVSIVVVQWADLVICK. Topologically, residues 939–951 are cytoplasmic; sequence TRRNSVFQQGMKN. S943 bears the Phosphoserine; by PKA mark. Residues 952–970 form a helical membrane-spanning segment; sequence KILIFGLFEETALAAFLSY. Topologically, residues 971–985 are extracellular; it reads CPGMGVALRMYPLKP. Residues 986 to 1006 form a helical membrane-spanning segment; it reads TWWFCAFPYSLLIFVYDEIRK. The Cytoplasmic segment spans residues 1007 to 1023; that stretch reads LIIRRRPGGWVEKETYY.

This sequence belongs to the cation transport ATPase (P-type) (TC 3.A.3) family. Type IIC subfamily. As to quaternary structure, the sodium/potassium-transporting ATPase is composed of a catalytic alpha subunit, an auxiliary non-catalytic beta subunit and an additional regulatory subunit. Interacts with regulatory subunit FXYD1. Interacts with regulatory subunit FXYD3. Interacts with SIK1. Interacts with SLC35G1 and STIM1. Interacts with CLN3; this interaction regulates the sodium/potassium-transporting ATPase complex localization at the plasma membrane. Interacts with SCN7A; activates ATP1A1 P-type sodium:potassium-exchanging transporter activity which indirectly signals to nearby neurons to regulate sodium homeostasis. Post-translationally, phosphorylation on Tyr-10 modulates pumping activity. Phosphorylation of Ser-943 by PKA modulates the response of ATP1A1 to PKC. Dephosphorylation by protein phosphatase 2A (PP2A) following increases in intracellular sodium, leading to increase catalytic activity. In terms of tissue distribution, expressed in endocardial endothelial cells.

The protein resides in the cell membrane. It is found in the basolateral cell membrane. Its subcellular location is the sarcolemma. It localises to the cell projection. The protein localises to the axon. The protein resides in the melanosome. It catalyses the reaction K(+)(out) + Na(+)(in) + ATP + H2O = K(+)(in) + Na(+)(out) + ADP + phosphate + H(+). This is the catalytic component of the active enzyme, which catalyzes the hydrolysis of ATP coupled with the exchange of sodium and potassium ions across the plasma membrane. This action creates the electrochemical gradient of sodium and potassium ions, providing the energy for active transport of various nutrients. Could also be part of an osmosensory signaling pathway that senses body-fluid sodium levels and controls salt intake behavior as well as voluntary water intake to regulate sodium homeostasis. The sequence is that of Sodium/potassium-transporting ATPase subunit alpha-1 (ATP1A1) from Oryctolagus cuniculus (Rabbit).